A 594-amino-acid polypeptide reads, in one-letter code: Probable Xaa-Pro aminopeptidase P (594 aa).

Positions 391, 402, 500, and 514 each coordinate Mn(2+).

The protein belongs to the peptidase M24B family. Mn(2+) serves as cofactor.

It carries out the reaction Release of any N-terminal amino acid, including proline, that is linked to proline, even from a dipeptide or tripeptide.. Functionally, catalyzes the removal of a penultimate prolyl residue from the N-termini of peptides. This is Probable Xaa-Pro aminopeptidase P (ampp) from Pyrenophora tritici-repentis (strain Pt-1C-BFP) (Wheat tan spot fungus).